Consider the following 158-residue polypeptide: uncharacterized protein (158 aa).

This is an uncharacterized protein from Caenorhabditis elegans.